Here is a 313-residue protein sequence, read N- to C-terminus: Arabinooligosaccharides transport system permease protein AraP (313 aa).

The next 6 helical transmembrane spans lie at 39–59 (FVLS…IMSF), 91–111 (LEYT…LAIF), 126–146 (ALFI…RLIF), 176–196 (MFLM…LYFL), 224–244 (ITLP…IIGG), and 281–301 (MGYG…VSLI). One can recognise an ABC transmembrane type-1 domain in the interval 87-302 (LWNTLEYTFW…IVILVVSLIS (216 aa)).

The protein belongs to the binding-protein-dependent transport system permease family. MalFG subfamily. As to quaternary structure, the complex is composed of two ATP-binding proteins (MsmX), two transmembrane proteins (AraP and AraQ) and a solute-binding protein (AraN).

It is found in the cell membrane. Functionally, part of the ABC transporter complex AraNPQ involved in the uptake of arabinooligosaccharides. Transports alpha-1,5-arabinooligosaccharides, at least up to four L-arabinosyl units. Responsible for the translocation of the substrate across the membrane. The chain is Arabinooligosaccharides transport system permease protein AraP from Bacillus subtilis (strain 168).